The primary structure comprises 353 residues: Photosystem II D2 protein (353 aa).

At Thr2 the chain carries N-acetylthreonine. Thr2 carries the post-translational modification Phosphothreonine. A helical membrane pass occupies residues 41–61 (CAYFALGGWFTGTTFVTSWYT). His118 contacts chlorophyll a. The chain crosses the membrane as a helical span at residues 125 to 141 (GFMLRQFELARSVQLRP). Residues Gln130 and Asn143 each contribute to the pheophytin a site. A helical transmembrane segment spans residues 153–166 (VFVSVFLIYPLGQS). Residue His198 coordinates chlorophyll a. The helical transmembrane segment at 208–228 (AALLCAIHGATVENTLFEDGD) threads the bilayer. Residues His215 and Phe262 each coordinate a plastoquinone. His215 is a Fe cation binding site. Fe cation is bound at residue His269. The chain crosses the membrane as a helical span at residues 279 to 295 (GLWMSAIGVVGLALNLR).

The protein belongs to the reaction center PufL/M/PsbA/D family. PSII is composed of 1 copy each of membrane proteins PsbA, PsbB, PsbC, PsbD, PsbE, PsbF, PsbH, PsbI, PsbJ, PsbK, PsbL, PsbM, PsbT, PsbX, PsbY, PsbZ, Psb30/Ycf12, at least 3 peripheral proteins of the oxygen-evolving complex and a large number of cofactors. It forms dimeric complexes. Requires The D1/D2 heterodimer binds P680, chlorophylls that are the primary electron donor of PSII, and subsequent electron acceptors. It shares a non-heme iron and each subunit binds pheophytin, quinone, additional chlorophylls, carotenoids and lipids. There is also a Cl(-1) ion associated with D1 and D2, which is required for oxygen evolution. The PSII complex binds additional chlorophylls, carotenoids and specific lipids. as cofactor.

It localises to the plastid. Its subcellular location is the chloroplast thylakoid membrane. The catalysed reaction is 2 a plastoquinone + 4 hnu + 2 H2O = 2 a plastoquinol + O2. Photosystem II (PSII) is a light-driven water:plastoquinone oxidoreductase that uses light energy to abstract electrons from H(2)O, generating O(2) and a proton gradient subsequently used for ATP formation. It consists of a core antenna complex that captures photons, and an electron transfer chain that converts photonic excitation into a charge separation. The D1/D2 (PsbA/PsbD) reaction center heterodimer binds P680, the primary electron donor of PSII as well as several subsequent electron acceptors. D2 is needed for assembly of a stable PSII complex. The chain is Photosystem II D2 protein from Welwitschia mirabilis (Tree tumbo).